We begin with the raw amino-acid sequence, 262 residues long: Small ribosomal subunit protein eS1y (262 aa).

Positions 1–18 (MAVGKNKRISKGRKGGKK) are enriched in basic residues. Positions 1–21 (MAVGKNKRISKGRKGGKKKAV) are disordered.

Belongs to the eukaryotic ribosomal protein eS1 family. In terms of assembly, component of the small ribosomal subunit. Mature ribosomes consist of a small (40S) and a large (60S) subunit. The 40S subunit contains about 33 different proteins and 1 molecule of RNA (18S). The 60S subunit contains about 49 different proteins and 3 molecules of RNA (25S, 5.8S and 5S).

It localises to the cytoplasm. The polypeptide is Small ribosomal subunit protein eS1y (Arabidopsis thaliana (Mouse-ear cress)).